A 157-amino-acid chain; its full sequence is Endoribonuclease YbeY (157 aa).

Zn(2+) is bound by residues histidine 116, histidine 120, and histidine 126.

It belongs to the endoribonuclease YbeY family. It depends on Zn(2+) as a cofactor.

The protein resides in the cytoplasm. In terms of biological role, single strand-specific metallo-endoribonuclease involved in late-stage 70S ribosome quality control and in maturation of the 3' terminus of the 16S rRNA. The polypeptide is Endoribonuclease YbeY (Pseudarthrobacter chlorophenolicus (strain ATCC 700700 / DSM 12829 / CIP 107037 / JCM 12360 / KCTC 9906 / NCIMB 13794 / A6) (Arthrobacter chlorophenolicus)).